A 308-amino-acid polypeptide reads, in one-letter code: Aspartate carbamoyltransferase catalytic subunit (308 aa).

Arg-59 and Thr-60 together coordinate carbamoyl phosphate. Residue Lys-87 participates in L-aspartate binding. Residues Arg-109, His-137, and Gln-140 each contribute to the carbamoyl phosphate site. Residues Arg-170 and Arg-224 each coordinate L-aspartate. Positions 265 and 266 each coordinate carbamoyl phosphate.

It belongs to the aspartate/ornithine carbamoyltransferase superfamily. ATCase family. In terms of assembly, heterododecamer (2C3:3R2) of six catalytic PyrB chains organized as two trimers (C3), and six regulatory PyrI chains organized as three dimers (R2).

The enzyme catalyses carbamoyl phosphate + L-aspartate = N-carbamoyl-L-aspartate + phosphate + H(+). It participates in pyrimidine metabolism; UMP biosynthesis via de novo pathway; (S)-dihydroorotate from bicarbonate: step 2/3. Its function is as follows. Catalyzes the condensation of carbamoyl phosphate and aspartate to form carbamoyl aspartate and inorganic phosphate, the committed step in the de novo pyrimidine nucleotide biosynthesis pathway. The chain is Aspartate carbamoyltransferase catalytic subunit from Flavobacterium johnsoniae (strain ATCC 17061 / DSM 2064 / JCM 8514 / BCRC 14874 / CCUG 350202 / NBRC 14942 / NCIMB 11054 / UW101) (Cytophaga johnsonae).